We begin with the raw amino-acid sequence, 124 residues long: Fluoride-specific ion channel FluC (124 aa).

The next 4 membrane-spanning stretches (helical) occupy residues 3–23 (VLLIFLGCGAGGVARYGVSNL), 34–54 (IGTLIVNITGSLLMGILFIFI), 68–88 (LLLIGFLGGYTTFSSFSIETF), and 100–120 (ALNVLLSVALCIAGAWLGVLI). Residues G75 and T78 each contribute to the Na(+) site.

The protein belongs to the fluoride channel Fluc/FEX (TC 1.A.43) family.

It is found in the cell inner membrane. It catalyses the reaction fluoride(in) = fluoride(out). Na(+) is not transported, but it plays an essential structural role and its presence is essential for fluoride channel function. Functionally, fluoride-specific ion channel. Important for reducing fluoride concentration in the cell, thus reducing its toxicity. The protein is Fluoride-specific ion channel FluC of Coxiella burnetii (strain CbuK_Q154) (Coxiella burnetii (strain Q154)).